Consider the following 165-residue polypeptide: UPF0303 protein Bamb_1459 (165 aa).

Belongs to the UPF0303 family.

The chain is UPF0303 protein Bamb_1459 from Burkholderia ambifaria (strain ATCC BAA-244 / DSM 16087 / CCUG 44356 / LMG 19182 / AMMD) (Burkholderia cepacia (strain AMMD)).